The chain runs to 254 residues: Ribosomal RNA small subunit methyltransferase G (254 aa).

S-adenosyl-L-methionine-binding positions include Gly84, Phe89, 136 to 137 (VE), and Arg155. Residues 231 to 254 (HLYPRAVGIPSKQPLGIQADDNRS) are disordered.

The protein belongs to the methyltransferase superfamily. RNA methyltransferase RsmG family.

The protein resides in the cytoplasm. Specifically methylates the N7 position of a guanine in 16S rRNA. This chain is Ribosomal RNA small subunit methyltransferase G, found in Synechococcus sp. (strain WH7803).